The sequence spans 116 residues: Small ribosomal subunit protein uS11m (116 aa).

It belongs to the universal ribosomal protein uS11 family.

The protein resides in the mitochondrion. The sequence is that of Small ribosomal subunit protein uS11m (RPS11) from Chondrus crispus (Carrageen Irish moss).